Reading from the N-terminus, the 170-residue chain is Adenine phosphoribosyltransferase (170 aa).

Belongs to the purine/pyrimidine phosphoribosyltransferase family. In terms of assembly, homodimer.

Its subcellular location is the cytoplasm. It carries out the reaction AMP + diphosphate = 5-phospho-alpha-D-ribose 1-diphosphate + adenine. It participates in purine metabolism; AMP biosynthesis via salvage pathway; AMP from adenine: step 1/1. In terms of biological role, catalyzes a salvage reaction resulting in the formation of AMP, that is energically less costly than de novo synthesis. This Alkaliphilus metalliredigens (strain QYMF) protein is Adenine phosphoribosyltransferase.